A 142-amino-acid polypeptide reads, in one-letter code: Large ribosomal subunit protein uL11 (142 aa).

The protein belongs to the universal ribosomal protein uL11 family. As to quaternary structure, part of the ribosomal stalk of the 50S ribosomal subunit. Interacts with L10 and the large rRNA to form the base of the stalk. L10 forms an elongated spine to which L12 dimers bind in a sequential fashion forming a multimeric L10(L12)X complex. One or more lysine residues are methylated.

Functionally, forms part of the ribosomal stalk which helps the ribosome interact with GTP-bound translation factors. The chain is Large ribosomal subunit protein uL11 from Shewanella sp. (strain ANA-3).